Here is a 323-residue protein sequence, read N- to C-terminus: Aspartate carbamoyltransferase catalytic subunit (323 aa).

2 residues coordinate carbamoyl phosphate: Arg-55 and Thr-56. Position 83 (Lys-83) interacts with L-aspartate. Positions 105, 138, and 141 each coordinate carbamoyl phosphate. The L-aspartate site is built by Arg-181 and Arg-235. Gly-276 and Pro-277 together coordinate carbamoyl phosphate.

It belongs to the aspartate/ornithine carbamoyltransferase superfamily. ATCase family. In terms of assembly, heterododecamer (2C3:3R2) of six catalytic PyrB chains organized as two trimers (C3), and six regulatory PyrI chains organized as three dimers (R2).

It catalyses the reaction carbamoyl phosphate + L-aspartate = N-carbamoyl-L-aspartate + phosphate + H(+). It participates in pyrimidine metabolism; UMP biosynthesis via de novo pathway; (S)-dihydroorotate from bicarbonate: step 2/3. Its function is as follows. Catalyzes the condensation of carbamoyl phosphate and aspartate to form carbamoyl aspartate and inorganic phosphate, the committed step in the de novo pyrimidine nucleotide biosynthesis pathway. This is Aspartate carbamoyltransferase catalytic subunit from Corynebacterium aurimucosum (strain ATCC 700975 / DSM 44827 / CIP 107346 / CN-1) (Corynebacterium nigricans).